Consider the following 198-residue polypeptide: Zinc finger protein 41 homolog (198 aa).

Over residues 1-12 (MEKPAGRKKKTP) the composition is skewed to basic residues. Residues 1–55 (MEKPAGRKKKTPTPREEADVQKSALREEKVSGDRKPPERPTVPRKPRTEPCLSPE) form a disordered region. The segment covering 13 to 38 (TPREEADVQKSALREEKVSGDRKPPE) has biased composition (basic and acidic residues). C2H2-type zinc fingers lie at residues 87-109 (YECSECGRIFKHKTDHIRHQRVH), 115-137 (FKCAQCGKAFRHSSDVTKHQRTH), 143-165 (FKCGECGKAFNCGSNLLKHQKTH), and 171-193 (YECTHCGKAFAYSSCLIRHQKRH).

The protein belongs to the krueppel C2H2-type zinc-finger protein family.

The protein localises to the nucleus. A putative DNA-binding regulatory protein associated with meiosis in spermatogenesis. The chain is Zinc finger protein 41 homolog (ZFP41) from Homo sapiens (Human).